The primary structure comprises 489 residues: MRRSIRNLAENVEKCPYSPTSSPNTPPRTFSEIPGPREIPVIGNIGYFKYAVKSDAKTIENYNQHLEEMYKKYGKIVKENLGFGRKYVVHIFDPADVQTVLAADGKTPFIVPLQETTQKYREMKGMNPGLGNLNGPEWYRLRSSVQHAMMRPQSVQTYLPFSQIVSNDLVCHVADQQKRFGLVDMQKVAGRWSLESAGQILFEKSLGSLGNRSEWADGLIELNKKIFQLSAKMRLGLPIFRLFSTPSWRKMVDLEDQFYSEVDRLMDDALDKLKVNDSDSKDMRFASYLINRKELNRRDVKVILLSMFSDGLSTTAPMLIYNLYNLATHPEALKEIQKEIKEDPASSKLTFLRACIKETFRMFPIGTEVSRVTQKNLILSGYEVPAGTAVDINTNVLMRHEVLFSDSPREFKPQRWLEKSKEVHPFAYLPFGFGPRMCAGRRFAEQDLLTSLAKLCGNYDIRHRGDPITQIYETLLLPRGDCTFEFKKL.

The interval 12-31 (VEKCPYSPTSSPNTPPRTFS) is disordered. Residues 16-29 (PYSPTSSPNTPPRT) show a composition bias toward low complexity. Cys-438 provides a ligand contact to heme.

Belongs to the cytochrome P450 family. It depends on heme as a cofactor.

Functionally, cytochromes P450 are a group of heme-thiolate monooxygenases. They oxidize a variety of structurally unrelated compounds, including steroids, fatty acids, and xenobiotics. This chain is Probable cytochrome P450 CYP44 (cyp-44A1), found in Caenorhabditis elegans.